The primary structure comprises 333 residues: MLRIAIDAMGGDFGPEPIIEGLVLALRKNNNFTAIAVGNKEQLLPLIPQGLLPRIEILDTNDVISMHDNATDALKRKDSTIYKAIELVREGNADAVVSAGHSGASMSLATLRIGRIKGVSRPAIATLMPTSENQNTLVLDVGANVDSDAKNLFEFAVMGQVYAQYALRLDEPIVGLLSNGEEDSKGNEVTKEAYKLLSKLPGFAGNVEGSDIFKGTVDVVVCDGFIGNILLKTAEGVADTIGKIIKKNLKRSLISIAGAVLMRKVFKNLKVRVDYAEYGGAPLLGVKAPVIISHGKSNSKAIQNAIFQAINAASSNLDSIIEQRLVEYSNKID.

This sequence belongs to the PlsX family. In terms of assembly, homodimer. Probably interacts with PlsY.

It localises to the cytoplasm. It catalyses the reaction a fatty acyl-[ACP] + phosphate = an acyl phosphate + holo-[ACP]. It participates in lipid metabolism; phospholipid metabolism. Catalyzes the reversible formation of acyl-phosphate (acyl-PO(4)) from acyl-[acyl-carrier-protein] (acyl-ACP). This enzyme utilizes acyl-ACP as fatty acyl donor, but not acyl-CoA. In Aliarcobacter butzleri (strain RM4018) (Arcobacter butzleri), this protein is Phosphate acyltransferase.